Reading from the N-terminus, the 551-residue chain is Palmdelphin (551 aa).

Position 1 is an N-acetylmethionine (methionine 1). Residues glutamine 12 to isoleucine 106 adopt a coiled-coil conformation. Lysine 125 is covalently cross-linked (Glycyl lysine isopeptide (Lys-Gly) (interchain with G-Cter in SUMO2)). Residue serine 135 is modified to Phosphoserine. Residue lysine 179 forms a Glycyl lysine isopeptide (Lys-Gly) (interchain with G-Cter in SUMO1); alternate linkage. Lysine 179 is covalently cross-linked (Glycyl lysine isopeptide (Lys-Gly) (interchain with G-Cter in SUMO2); alternate). Over residues glutamate 248–glutamate 259 the composition is skewed to basic and acidic residues. The segment at glutamate 248–glycine 280 is disordered. The span at threonine 270 to glycine 280 shows a compositional bias: polar residues. Threonine 271 bears the Phosphothreonine mark. 4 positions are modified to phosphoserine: serine 321, serine 370, serine 384, and serine 385. 2 disordered regions span residues threonine 342–glutamate 392 and aspartate 449–serine 535. Residues lysine 484–asparagine 495 are compositionally biased toward basic and acidic residues. Residues serine 498, serine 515, and serine 520 each carry the phosphoserine modification.

It belongs to the paralemmin family. As to quaternary structure, interacts with GLUL. In terms of processing, phosphorylated. As to expression, ubiquitous. Most abundant in cardiac and skeletal muscle.

It is found in the cytoplasm. The protein localises to the cell projection. The protein resides in the dendrite. It localises to the dendritic spine. This chain is Palmdelphin (PALMD), found in Homo sapiens (Human).